The following is a 262-amino-acid chain: Putative cysteine-rich repeat secretory protein 24 (262 aa).

The N-terminal stretch at 1-29 (MSLSSSVTKHLISASILAIVAMQLPSVHS) is a signal peptide. 2 consecutive Gnk2-homologous domains span residues 39 to 141 (YLHH…SIYT) and 147 to 259 (YKNN…LYPF).

This sequence belongs to the cysteine-rich repeat secretory protein family.

The protein localises to the secreted. The chain is Putative cysteine-rich repeat secretory protein 24 (CRRSP24) from Arabidopsis thaliana (Mouse-ear cress).